The following is a 339-amino-acid chain: Probable cytosolic iron-sulfur protein assembly protein CIAO1 (339 aa).

WD repeat units lie at residues 14–53 (HPDS…WICK), 59–98 (GHQR…FECV), 103–142 (GHEN…EYEC), 148–187 (SHTQ…WVCC), 192–231 (GHES…NEQG), 250–289 (FHSR…DPQQ), and 301–339 (AHSQ…SEGI). Positions 176 to 178 (LYR) match the LYR motif; required for interaction with HSC20 motif.

This sequence belongs to the WD repeat CIA1 family. Component of the CIA complex. Interacts with CIAO2A and forms a complex with CIAO2B and MMS19; the interactions with CIAO2A and CIAO2B are mutually exclusive. Interacts with CHD1L, ERCC2, IREB2 and POLD1. Component of the MMXD complex, which includes CIAO1, ERCC2, CIAO2B, MMS19 and SLC25A5. Interacts with WT1. Interacts with CIAO3. Interacts (via LYR motif) with HSC20.

The protein localises to the cytoplasm. Its function is as follows. Key component of the cytosolic iron-sulfur protein assembly (CIA) complex, a multiprotein complex that mediates the incorporation of iron-sulfur cluster into extramitochondrial Fe/S proteins. As a CIA complex component, interacts specifically with CIAO2A or CIAO2B and MMS19 to assist different branches of iron-sulfur protein assembly, depending of its interactors. The complex CIAO1:CIAO2B:MMS19 binds to and facilitates the assembly of most cytosolic-nuclear Fe/S proteins. CIAO1:CIAO2A specifically matures ACO1 and stabilizes IREB2. Seems to specifically modulate the transactivation activity of WT1. As part of the mitotic spindle-associated MMXD complex it may play a role in chromosome segregation. The polypeptide is Probable cytosolic iron-sulfur protein assembly protein CIAO1 (Bos taurus (Bovine)).